We begin with the raw amino-acid sequence, 395 residues long: Xylose isomerase (395 aa).

Catalysis depends on residues His-54 and Glu-57. Residues 80 to 108 (AVPAGAGRDRHEGADGDDEPVHAPGCSRD) are disordered. Residues Glu-189, Glu-225, His-228, Asp-253, Asp-263, Asp-265, and Asp-295 each coordinate Mg(2+).

The protein belongs to the xylose isomerase family. Homotetramer. The cofactor is Mg(2+).

The protein resides in the cytoplasm. The enzyme catalyses alpha-D-xylose = alpha-D-xylulofuranose. This chain is Xylose isomerase, found in Streptomyces lividans.